The sequence spans 483 residues: ATP synthase subunit beta (483 aa).

169–176 (GGAGVGKT) serves as a coordination point for ATP.

Belongs to the ATPase alpha/beta chains family. In terms of assembly, F-type ATPases have 2 components, CF(1) - the catalytic core - and CF(0) - the membrane proton channel. CF(1) has five subunits: alpha(3), beta(3), gamma(1), delta(1), epsilon(1). CF(0) has three main subunits: a(1), b(2) and c(9-12). The alpha and beta chains form an alternating ring which encloses part of the gamma chain. CF(1) is attached to CF(0) by a central stalk formed by the gamma and epsilon chains, while a peripheral stalk is formed by the delta and b chains.

The protein localises to the cell membrane. The enzyme catalyses ATP + H2O + 4 H(+)(in) = ADP + phosphate + 5 H(+)(out). Functionally, produces ATP from ADP in the presence of a proton gradient across the membrane. The catalytic sites are hosted primarily by the beta subunits. In Corynebacterium glutamicum (strain ATCC 13032 / DSM 20300 / JCM 1318 / BCRC 11384 / CCUG 27702 / LMG 3730 / NBRC 12168 / NCIMB 10025 / NRRL B-2784 / 534), this protein is ATP synthase subunit beta.